A 325-amino-acid chain; its full sequence is ATP phosphoribosyltransferase (325 aa).

It belongs to the ATP phosphoribosyltransferase family. Long subfamily. Mg(2+) serves as cofactor.

The protein resides in the cytoplasm. It catalyses the reaction 1-(5-phospho-beta-D-ribosyl)-ATP + diphosphate = 5-phospho-alpha-D-ribose 1-diphosphate + ATP. It functions in the pathway amino-acid biosynthesis; L-histidine biosynthesis; L-histidine from 5-phospho-alpha-D-ribose 1-diphosphate: step 1/9. Its activity is regulated as follows. Feedback inhibited by histidine. Its function is as follows. Catalyzes the condensation of ATP and 5-phosphoribose 1-diphosphate to form N'-(5'-phosphoribosyl)-ATP (PR-ATP). Has a crucial role in the pathway because the rate of histidine biosynthesis seems to be controlled primarily by regulation of HisG enzymatic activity. The chain is ATP phosphoribosyltransferase from Rhodopseudomonas palustris (strain HaA2).